A 350-amino-acid chain; its full sequence is Uroporphyrinogen decarboxylase (350 aa).

Substrate-binding positions include 27–31 (RQAGR), Phe46, Asp76, Tyr152, Ser207, and His321.

It belongs to the uroporphyrinogen decarboxylase family. In terms of assembly, homodimer.

The protein resides in the cytoplasm. The enzyme catalyses uroporphyrinogen III + 4 H(+) = coproporphyrinogen III + 4 CO2. It participates in porphyrin-containing compound metabolism; protoporphyrin-IX biosynthesis; coproporphyrinogen-III from 5-aminolevulinate: step 4/4. In terms of biological role, catalyzes the decarboxylation of four acetate groups of uroporphyrinogen-III to yield coproporphyrinogen-III. In Listeria welshimeri serovar 6b (strain ATCC 35897 / DSM 20650 / CCUG 15529 / CIP 8149 / NCTC 11857 / SLCC 5334 / V8), this protein is Uroporphyrinogen decarboxylase.